The chain runs to 83 residues: NAD(P)H-quinone oxidoreductase subunit L, organellar chromatophore (83 aa).

Helical transmembrane passes span 17–37 (LLLA…LALY) and 53–73 (LFVY…SPFL).

Belongs to the complex I NdhL subunit family. NDH-1 can be composed of about 15 different subunits; different subcomplexes with different compositions have been identified which probably have different functions.

It is found in the plastid. It localises to the organellar chromatophore thylakoid membrane. It carries out the reaction a plastoquinone + NADH + (n+1) H(+)(in) = a plastoquinol + NAD(+) + n H(+)(out). The enzyme catalyses a plastoquinone + NADPH + (n+1) H(+)(in) = a plastoquinol + NADP(+) + n H(+)(out). NDH-1 shuttles electrons from an unknown electron donor, via FMN and iron-sulfur (Fe-S) centers, to quinones in the respiratory and/or the photosynthetic chain. The immediate electron acceptor for the enzyme in this species is believed to be plastoquinone. Couples the redox reaction to proton translocation, and thus conserves the redox energy in a proton gradient. The protein is NAD(P)H-quinone oxidoreductase subunit L, organellar chromatophore of Paulinella chromatophora.